Consider the following 396-residue polypeptide: Beta-1,4-galactosyltransferase 3 (396 aa).

Over 1 to 10 (MLRRLLERPC) the chain is Cytoplasmic. The chain crosses the membrane as a helical; Signal-anchor for type II membrane protein span at residues 11 to 31 (TLALLVGSQLAVMMYLSLGGF). The Lumenal portion of the chain corresponds to 32–396 (RSLSALFGRE…ANHTAPHGSH (365 aa)). Asn-57 carries N-linked (GlcNAc...) asparagine glycosylation. Cys-80 and Cys-122 form a disulfide bridge. 133 to 137 (PHRAR) provides a ligand contact to UDP-alpha-D-galactose. A glycan (N-linked (GlcNAc...) asparagine) is linked at Asn-169. UDP-alpha-D-galactose-binding positions include 172 to 174 (FNR), 199 to 200 (VD), Tyr-229, and Trp-261. Cys-193 and Cys-212 are disulfide-bonded. Asp-200 provides a ligand contact to Mn(2+). 263 to 266 (GEDD) is a binding site for N-acetyl-D-glucosamine. His-294 contacts Mn(2+). 294–296 (HRG) contacts UDP-alpha-D-galactose. Arg-306 serves as a coordination point for N-acetyl-D-glucosamine. N-linked (GlcNAc...) asparagine glycosylation is present at Asn-340. A disordered region spans residues 341-396 (ITADIGTDPRGPRTSSGPHYPPGSSQAFRQEMLQRRPPARPGPLPTANHTAPHGSH). Over residues 353–368 (RTSSGPHYPPGSSQAF) the composition is skewed to polar residues. N-linked (GlcNAc...) asparagine glycosylation occurs at Asn-388.

Belongs to the glycosyltransferase 7 family. Mn(2+) is required as a cofactor.

Its subcellular location is the golgi apparatus. It is found in the golgi stack membrane. It carries out the reaction an N-acetyl-beta-D-glucosaminyl derivative + UDP-alpha-D-galactose = a beta-D-galactosyl-(1-&gt;4)-N-acetyl-beta-D-glucosaminyl derivative + UDP + H(+). The catalysed reaction is N-acetyl-D-glucosamine + UDP-alpha-D-galactose = beta-D-galactosyl-(1-&gt;4)-N-acetyl-D-glucosamine + UDP + H(+). It catalyses the reaction a beta-D-GlcNAc-(1-&gt;3)-beta-D-Gal-(1-&gt;4)-beta-D-Glc-(1&lt;-&gt;1)-Cer(d18:1(4E)) + UDP-alpha-D-galactose = a neolactoside nLc4Cer(d18:1(4E)) + UDP + H(+). The enzyme catalyses a beta-D-glucosylceramide + UDP-alpha-D-galactose = a beta-D-galactosyl-(1-&gt;4)-beta-D-glucosyl-(1&lt;-&gt;1)-ceramide + UDP + H(+). It carries out the reaction a neolactoside IV(3)-beta-GlcNAc-nLc4Cer + UDP-alpha-D-galactose = a neolactoside nLc6Cer + UDP + H(+). It functions in the pathway protein modification; protein glycosylation. Responsible for the synthesis of complex-type N-linked oligosaccharides in many glycoproteins as well as the carbohydrate moieties of glycolipids. This is Beta-1,4-galactosyltransferase 3 (B4GALT3) from Bos taurus (Bovine).